A 122-amino-acid polypeptide reads, in one-letter code: Large ribosomal subunit protein uL14c (122 aa).

This sequence belongs to the universal ribosomal protein uL14 family. As to quaternary structure, part of the 50S ribosomal subunit.

The protein localises to the plastid. Its subcellular location is the chloroplast. Functionally, binds to 23S rRNA. This is Large ribosomal subunit protein uL14c from Phalaenopsis aphrodite subsp. formosana (Moth orchid).